A 70-amino-acid chain; its full sequence is Chondroitin proteoglycan 9 (70 aa).

A signal peptide spans 1-19 (MNFWHLLLLAVLFFVTVFG). S25 and S27 each carry an O-linked (Xyl...) (chondroitin sulfate) serine glycan.

The protein is Chondroitin proteoglycan 9 (cpg-9) of Caenorhabditis briggsae.